A 745-amino-acid chain; its full sequence is Probable endochitinase ARB_07371 (745 aa).

The signal sequence occupies residues 1–23 (MALPKTIMAFIAFISFLVSTTFA). Residues 30-351 (TNVVTYWGQG…SNIKRLLLNN (322 aa)) form the GH18 domain. Catalysis depends on E178, which acts as the Proton donor. Disordered stretches follow at residues 351–372 (NDPS…SMST) and 395–446 (WSMP…TTEI). Residues 357-372 (TTTSKTMSSTKTSMST) show a composition bias toward low complexity. N-linked (GlcNAc...) asparagine glycosylation is found at N438 and N484. The disordered stretch occupies residues 651–715 (SEPMTPTQVP…EMGGNGGDRT (65 aa)). A lipid anchor (GPI-anchor amidated glycine) is attached at G720. A propeptide spans 721-745 (GAGVVSPSFSVVVIVLGSIVYHIMQ) (removed in mature form).

Belongs to the glycosyl hydrolase 18 family. Chitinase class III subfamily.

Its subcellular location is the cell membrane. It localises to the secreted. The protein localises to the cell wall. The enzyme catalyses Random endo-hydrolysis of N-acetyl-beta-D-glucosaminide (1-&gt;4)-beta-linkages in chitin and chitodextrins.. Functionally, GPI-anchored chitinase involved in the degradation of chitin, a component of the cell walls of fungi and exoskeletal elements of some animals (including worms and arthropods). Required to reshape the cell wall at the sites where cell wall remodeling and/or cell wall maturation actively take place such as sites of conidia formation. The polypeptide is Probable endochitinase ARB_07371 (Arthroderma benhamiae (strain ATCC MYA-4681 / CBS 112371) (Trichophyton mentagrophytes)).